Consider the following 234-residue polypeptide: UPF0502 protein BTH_II0990 (234 aa).

This sequence belongs to the UPF0502 family.

This is UPF0502 protein BTH_II0990 from Burkholderia thailandensis (strain ATCC 700388 / DSM 13276 / CCUG 48851 / CIP 106301 / E264).